The following is a 371-amino-acid chain: Cysteine endopeptidase Rep1 (371 aa).

The first 28 residues, 1–28, serve as a signal peptide directing secretion; the sequence is MGRVISSWRVLAVVAALMAMAAVELCAA. A propeptide spans 29–133 (activation peptide); the sequence is IPFDERDLES…LPGFMYEGVR (105 aa). 3 disulfides stabilise this stretch: C156–C198, C190–C231, and C290–C342. C159 is an active-site residue. N228 carries an N-linked (GlcNAc...) asparagine glycan. Residues H296 and N317 contribute to the active site.

This sequence belongs to the peptidase C1 family. In terms of tissue distribution, expressed in germinating seeds.

The protein resides in the protein storage vacuole. Its function is as follows. Cysteine endopeptidase that digests in vitro both the acidic and basic subunits of glutelin, the major seed storage protein of rice. Acts as a negative regulator of cell death. This Oryza sativa subsp. japonica (Rice) protein is Cysteine endopeptidase Rep1.